Reading from the N-terminus, the 543-residue chain is CTP synthase (543 aa).

The interval 1-265 is amidoligase domain; sequence MARYIFITGG…DDEVLAAFGI (265 aa). Position 13 (serine 13) interacts with CTP. UTP is bound at residue serine 13. 14 to 19 is a binding site for ATP; the sequence is SLGKGL. Tyrosine 54 is an L-glutamine binding site. Aspartate 71 serves as a coordination point for ATP. Residues aspartate 71 and glutamate 139 each coordinate Mg(2+). CTP contacts are provided by residues 146–148, 186–191, and lysine 222; these read DIE and KTKPTQ. Residues 186–191 and lysine 222 each bind UTP; that span reads KTKPTQ. Residue 238 to 240 coordinates ATP; it reads RDV. In terms of domain architecture, Glutamine amidotransferase type-1 spans 291-542; it reads TIAIVGKYTG…IQAAMVQSRL (252 aa). Glycine 353 provides a ligand contact to L-glutamine. Cysteine 380 (nucleophile; for glutamine hydrolysis) is an active-site residue. Residues 381–384, glutamate 404, and arginine 470 each bind L-glutamine; that span reads FGMQ. Residues histidine 515 and glutamate 517 contribute to the active site.

This sequence belongs to the CTP synthase family. Homotetramer.

It carries out the reaction UTP + L-glutamine + ATP + H2O = CTP + L-glutamate + ADP + phosphate + 2 H(+). The catalysed reaction is L-glutamine + H2O = L-glutamate + NH4(+). It catalyses the reaction UTP + NH4(+) + ATP = CTP + ADP + phosphate + 2 H(+). It functions in the pathway pyrimidine metabolism; CTP biosynthesis via de novo pathway; CTP from UDP: step 2/2. Allosterically activated by GTP, when glutamine is the substrate; GTP has no effect on the reaction when ammonia is the substrate. The allosteric effector GTP functions by stabilizing the protein conformation that binds the tetrahedral intermediate(s) formed during glutamine hydrolysis. Inhibited by the product CTP, via allosteric rather than competitive inhibition. Catalyzes the ATP-dependent amination of UTP to CTP with either L-glutamine or ammonia as the source of nitrogen. Regulates intracellular CTP levels through interactions with the four ribonucleotide triphosphates. This Bradyrhizobium diazoefficiens (strain JCM 10833 / BCRC 13528 / IAM 13628 / NBRC 14792 / USDA 110) protein is CTP synthase.